The chain runs to 363 residues: Melanoma-associated antigen B16 (363 aa).

Positions 33 to 124 are disordered; sequence EPCSSPHLMA…PDQSDSTDLP (92 aa). The span at 82 to 97 shows a compositional bias: low complexity; sequence ASTSSDLQHPYDSSSE. The 200-residue stretch at 128–327 folds into the MAGE domain; that stretch reads VDGKVDFLVN…TVFLSQYEEA (200 aa). Residues 342 to 363 form a disordered region; sequence HADSSSTSGESSSDTSSNFSQV.

This is Melanoma-associated antigen B16 (Mageb16) from Mus musculus (Mouse).